Consider the following 163-residue polypeptide: UPF0262 protein RPE_4483 (163 aa).

It belongs to the UPF0262 family.

The sequence is that of UPF0262 protein RPE_4483 from Rhodopseudomonas palustris (strain BisA53).